We begin with the raw amino-acid sequence, 378 residues long: Alcohol dehydrogenase 1 (378 aa).

Residue cysteine 48 participates in Zn(2+) binding. 49-53 (HTDVL) contacts NAD(+). Zn(2+) is bound by residues histidine 69, cysteine 99, cysteine 102, cysteine 105, cysteine 113, and cysteine 177. Residues 202 to 207 (GIGTVG), aspartate 226, lysine 231, 274 to 276 (TGV), 297 to 299 (IGA), and 321 to 323 (TAF) contribute to the NAD(+) site.

The protein belongs to the zinc-containing alcohol dehydrogenase family. Class-IV subfamily. Homodimer. Zn(2+) is required as a cofactor. Present in non-glandular trichome cells.

It localises to the nucleus. It is found in the cytoplasm. The protein resides in the cytosol. It catalyses the reaction (+)-artemisinic alcohol + NAD(+) = (+)-artemisinic aldehyde + NADH + H(+). The protein operates within sesquiterpene biosynthesis. Functionally, involved in the biosynthesis of the antimalarial endoperoxide artemisinin. Catalyzes the conversion of artemisinic alcohol into artemisinic aldehyde. This Artemisia annua (Sweet wormwood) protein is Alcohol dehydrogenase 1.